We begin with the raw amino-acid sequence, 298 residues long: (DL)-glycerol-3-phosphatase 1, mitochondrial (298 aa).

The N-terminal 46 residues, 1–46, are a transit peptide targeting the mitochondrion; sequence MLTTPTRFVALRIPFRSSNKIPISIAPSPKVFPRKPVIRVPASLRF. Asp-77 acts as the Nucleophile in catalysis. Residues Asp-77, Asp-79, and Asp-242 each contribute to the Mg(2+) site. Catalysis depends on Asp-79, which acts as the Proton donor.

Belongs to the HAD-like hydrolase superfamily. DOG/GPP family. Mg(2+) serves as cofactor. As to expression, ubiquitous with highest expression in siliques. Mainly restricted to the meristem of immature flower and vascular elements of the root, shoot, leave, siliqua and developing embryo (at the protein level).

Its subcellular location is the mitochondrion. It carries out the reaction sn-glycerol 1-phosphate + H2O = glycerol + phosphate. It catalyses the reaction sn-glycerol 3-phosphate + H2O = glycerol + phosphate. The enzyme catalyses 5-amino-6-(5-phospho-D-ribitylamino)uracil + H2O = 5-amino-6-(D-ribitylamino)uracil + phosphate. Functionally, acts as a glycerol-3-phosphatase with higher stereospecificity for L-glycerol-3-phosphate than DL-glycerol-3-phosphate. Can also dephosphorylate in vitro 5-amino-6-(5-phospho-D-ribitylamino)uracil, also known as ARPP. The chain is (DL)-glycerol-3-phosphatase 1, mitochondrial from Arabidopsis thaliana (Mouse-ear cress).